Reading from the N-terminus, the 382-residue chain is Dual-specificity RNA methyltransferase RlmN (382 aa).

Residue Glu-96 is the Proton acceptor of the active site. The Radical SAM core domain occupies 102 to 342; the sequence is QGKRGTLCVS…VRTTRGEDID (241 aa). Residues Cys-109 and Cys-345 are joined by a disulfide bond. [4Fe-4S] cluster contacts are provided by Cys-116, Cys-120, and Cys-123. Residues 170-171, Ser-202, 224-226, and Asn-302 contribute to the S-adenosyl-L-methionine site; these read GE and SLH. The S-methylcysteine intermediate role is filled by Cys-345.

Belongs to the radical SAM superfamily. RlmN family. It depends on [4Fe-4S] cluster as a cofactor.

The protein localises to the cytoplasm. It carries out the reaction adenosine(2503) in 23S rRNA + 2 reduced [2Fe-2S]-[ferredoxin] + 2 S-adenosyl-L-methionine = 2-methyladenosine(2503) in 23S rRNA + 5'-deoxyadenosine + L-methionine + 2 oxidized [2Fe-2S]-[ferredoxin] + S-adenosyl-L-homocysteine. The enzyme catalyses adenosine(37) in tRNA + 2 reduced [2Fe-2S]-[ferredoxin] + 2 S-adenosyl-L-methionine = 2-methyladenosine(37) in tRNA + 5'-deoxyadenosine + L-methionine + 2 oxidized [2Fe-2S]-[ferredoxin] + S-adenosyl-L-homocysteine. Its function is as follows. Specifically methylates position 2 of adenine 2503 in 23S rRNA and position 2 of adenine 37 in tRNAs. m2A2503 modification seems to play a crucial role in the proofreading step occurring at the peptidyl transferase center and thus would serve to optimize ribosomal fidelity. The chain is Dual-specificity RNA methyltransferase RlmN from Pseudomonas fluorescens (strain SBW25).